The sequence spans 316 residues: Ribosomal RNA small subunit methyltransferase H (316 aa).

Residues 35-37 (GGH), D55, F79, D101, and Q108 contribute to the S-adenosyl-L-methionine site.

It belongs to the methyltransferase superfamily. RsmH family.

It is found in the cytoplasm. The catalysed reaction is cytidine(1402) in 16S rRNA + S-adenosyl-L-methionine = N(4)-methylcytidine(1402) in 16S rRNA + S-adenosyl-L-homocysteine + H(+). Its function is as follows. Specifically methylates the N4 position of cytidine in position 1402 (C1402) of 16S rRNA. The polypeptide is Ribosomal RNA small subunit methyltransferase H (Vibrio parahaemolyticus serotype O3:K6 (strain RIMD 2210633)).